The following is a 164-amino-acid chain: Nucleotide-binding protein Helmi_22490 (164 aa).

It belongs to the YajQ family.

In terms of biological role, nucleotide-binding protein. In Heliobacterium modesticaldum (strain ATCC 51547 / Ice1), this protein is Nucleotide-binding protein Helmi_22490.